A 619-amino-acid polypeptide reads, in one-letter code: 4-hydroxyphenylalkanoate adenylyltransferase (619 aa).

This sequence belongs to the ATP-dependent AMP-binding enzyme family.

The enzyme catalyses 17-(4-hydroxyphenyl)heptadecanoate + holo-[(phenol)carboxyphthiodiolenone synthase] + ATP = 17-(4-hydroxyphenyl)heptadecanoyl-[(phenol)carboxyphthiodiolenone synthase] + AMP + diphosphate. It catalyses the reaction 19-(4-hydroxyphenyl)nonadecanoate + holo-[(phenol)carboxyphthiodiolenone synthase] + ATP = 19-(4-hydroxyphenyl)nonadecanoyl-[(phenol)carboxyphthiodiolenone synthase] + AMP + diphosphate. It carries out the reaction dodecanoate + ATP + H(+) = dodecanoyl-AMP + diphosphate. It functions in the pathway lipid metabolism; fatty acid biosynthesis. Its function is as follows. Catalyzes the activation of long-chain fatty acids as acyl-adenylates (acyl-AMP), which are then transferred to the multifunctional polyketide synthase PpsA for further chain extension. Involved in the biosynthesis of phenolphthiocerol, which is an important intermediate in the biosynthesis of phenolic glycolipid (PGL), also called mycosid B. In Mycobacterium tuberculosis (strain ATCC 25618 / H37Rv), this protein is 4-hydroxyphenylalkanoate adenylyltransferase (fadD29).